The chain runs to 342 residues: Inositol 2-dehydrogenase 2 (342 aa).

The protein belongs to the Gfo/Idh/MocA family. Homotetramer.

The enzyme catalyses myo-inositol + NAD(+) = scyllo-inosose + NADH + H(+). Involved in the oxidation of myo-inositol (MI) to 2-keto-myo-inositol (2KMI or 2-inosose). In Mycolicibacterium vanbaalenii (strain DSM 7251 / JCM 13017 / BCRC 16820 / KCTC 9966 / NRRL B-24157 / PYR-1) (Mycobacterium vanbaalenii), this protein is Inositol 2-dehydrogenase 2.